A 75-amino-acid chain; its full sequence is Small integral membrane protein 7-A (75 aa).

A signal peptide spans methionine 1–alanine 17. The Extracellular portion of the chain corresponds to valine 18–tyrosine 53. Residues phenylalanine 54–glycine 74 traverse the membrane as a helical segment. A topological domain (cytoplasmic) is located at residue serine 75.

The protein belongs to the SMIM7 family.

The protein resides in the membrane. This chain is Small integral membrane protein 7-A (smim7-a), found in Xenopus laevis (African clawed frog).